A 206-amino-acid chain; its full sequence is Nucleoside triphosphate pyrophosphatase (206 aa).

D78 serves as the catalytic Proton acceptor.

It belongs to the Maf family. The cofactor is a divalent metal cation.

The protein resides in the cytoplasm. The catalysed reaction is a ribonucleoside 5'-triphosphate + H2O = a ribonucleoside 5'-phosphate + diphosphate + H(+). The enzyme catalyses a 2'-deoxyribonucleoside 5'-triphosphate + H2O = a 2'-deoxyribonucleoside 5'-phosphate + diphosphate + H(+). Its function is as follows. Nucleoside triphosphate pyrophosphatase. May have a dual role in cell division arrest and in preventing the incorporation of modified nucleotides into cellular nucleic acids. The polypeptide is Nucleoside triphosphate pyrophosphatase (Prochlorococcus marinus (strain MIT 9312)).